A 103-amino-acid polypeptide reads, in one-letter code: Pro-corazonin (103 aa).

The first 19 residues, 1–19 (MSANVTLLLIFVTLASVTA), serve as a signal peptide directing secretion. Gln-20 is modified (pyrrolidone carboxylic acid). The residue at position 30 (Asn-30) is an Asparagine amide. Residues 34–103 (DQGHLRPELK…NLNAMMDAFY (70 aa)) constitute a propeptide that is removed on maturation.

As to expression, expressed in corpora cardiaca (CC), corpora allata (CA), antennal lobe (AL) and gnathal ganglion (GNG) (at protein level). Expression in CC and CA detected in all animals, expression in AL and in GNG in some animals.

Its subcellular location is the secreted. Its function is as follows. Cardioactive peptide. Corazonin is probably involved in the physiological regulation of the heart beat. This is Pro-corazonin from Agrotis ipsilon (Black cutworm moth).